A 133-amino-acid polypeptide reads, in one-letter code: MLNLRVIAPNRIVWNSEVREIILSTNNGQMGILPNHAPLLTALDIGVMKIRIDERWSNMALMGGFATIDNNQITILVNEAEKSSEIDPEEAQETFQKAQANLTRAEGKRKTIEAHLAFKRAKARLEAINVTQE.

It belongs to the ATPase epsilon chain family. As to quaternary structure, F-type ATPases have 2 components, CF(1) - the catalytic core - and CF(0) - the membrane proton channel. CF(1) has five subunits: alpha(3), beta(3), gamma(1), delta(1), epsilon(1). CF(0) has three main subunits: a, b and c.

The protein localises to the plastid. The protein resides in the chloroplast thylakoid membrane. Its function is as follows. Produces ATP from ADP in the presence of a proton gradient across the membrane. The sequence is that of ATP synthase epsilon chain, chloroplastic from Psilotum nudum (Whisk fern).